The following is a 1037-amino-acid chain: Serine/threonine-protein kinase ULK2 (1037 aa).

Residues 9 to 271 (YCKRDLVGHG…FEAFFSHPFL (263 aa)) form the Protein kinase domain. Residues 15–23 (VGHGAFAVV) and K39 each bind ATP. The active-site Proton acceptor is the D131. Positions 319–350 (ENLSSPPLGPPNYLQVSKDSASNSSKNSSCDT) are disordered. Residues 335-348 (SKDSASNSSKNSSC) show a composition bias toward low complexity. S430 is modified (phosphoserine). 4 disordered regions span residues 452 to 480 (CSPV…PSPL), 494 to 515 (GHPQ…PQTQ), 540 to 594 (QKLR…KTPL), and 626 to 697 (HGPA…NTER). Polar residues-rich tracts occupy residues 506–515 (SSGSPVPQTQ) and 571–585 (LGTS…SPRN). Over residues 632–643 (QSKDGNDPRECS) the composition is skewed to basic and acidic residues. Over residues 658–678 (QQQSKAVFGRSVSTGKLSEQQ) the composition is skewed to polar residues. Phosphoserine is present on residues S772 and S781. The segment at 813–1037 (ELPEETLMER…SALCCSTATV (225 aa)) is CTD-like region.

It belongs to the protein kinase superfamily. Ser/Thr protein kinase family. APG1/unc-51/ULK1 subfamily. In terms of assembly, component of a complex consisting of ATG13/KIAA0652, ULK1 and RB1CC1/FIP200. Interacts (via C-terminus) with ATG13/KIAA0652. Associates with the mammalian target of rapamycin complex 1 (mTORC1) through an interaction with RPTOR. Interacts with SYNGAP1. Post-translationally, autophosphorylated. In response to nutrient limitation, probably phosphorylated and activated by AMPK, leading to activate autophagy. Widely expressed.

The protein localises to the cytoplasmic vesicle membrane. It carries out the reaction L-seryl-[protein] + ATP = O-phospho-L-seryl-[protein] + ADP + H(+). The enzyme catalyses L-threonyl-[protein] + ATP = O-phospho-L-threonyl-[protein] + ADP + H(+). Its function is as follows. Serine/threonine-protein kinase involved in autophagy in response to starvation. Acts upstream of phosphatidylinositol 3-kinase PIK3C3 to regulate the formation of autophagophores, the precursors of autophagosomes. Part of regulatory feedback loops in autophagy: acts both as a downstream effector and a negative regulator of mammalian target of rapamycin complex 1 (mTORC1) via interaction with RPTOR. Activated via phosphorylation by AMPK, also acts as a negative regulator of AMPK through phosphorylation of the AMPK subunits PRKAA1, PRKAB2 and PRKAG1. May phosphorylate ATG13/KIAA0652, FRS2, FRS3 and RPTOR; however such data need additional evidences. Not involved in ammonia-induced autophagy or in autophagic response of cerebellar granule neurons (CGN) to low potassium concentration. Plays a role early in neuronal differentiation and is required for granule cell axon formation: may govern axon formation via Ras-like GTPase signaling and through regulation of the Rab5-mediated endocytic pathways within developing axons. The polypeptide is Serine/threonine-protein kinase ULK2 (Ulk2) (Mus musculus (Mouse)).